Reading from the N-terminus, the 211-residue chain is Mediator of RNA polymerase II transcription subunit 20 (211 aa).

It belongs to the Mediator complex subunit 20 family. Component of the Mediator complex.

Its subcellular location is the nucleus. Functionally, component of the Mediator complex, a coactivator involved in the regulated transcription of nearly all RNA polymerase II-dependent genes. Mediator functions as a bridge to convey information from gene-specific regulatory proteins to the basal RNA polymerase II transcription machinery. Mediator is recruited to promoters by direct interactions with regulatory proteins and serves as a scaffold for the assembly of a functional preinitiation complex with RNA polymerase II and the general transcription factors. This Gallus gallus (Chicken) protein is Mediator of RNA polymerase II transcription subunit 20 (MED20).